A 583-amino-acid chain; its full sequence is CTP synthase (583 aa).

An amidoligase domain region spans residues 1 to 278 (MRRHPQTATK…DAFVVRRLNL (278 aa)). Ser20 serves as a coordination point for CTP. A UTP-binding site is contributed by Ser20. ATP contacts are provided by residues 21–26 (SLGKGL) and Asp78. Mg(2+) is bound by residues Asp78 and Glu152. CTP is bound by residues 159–161 (DIE), 199–204 (KTKPTQ), and Lys235. UTP is bound by residues 199-204 (KTKPTQ) and Lys235. Positions 303–551 (RIALVGKYVE…VKAAIDYKEG (249 aa)) constitute a Glutamine amidotransferase type-1 domain. Residue Gly366 participates in L-glutamine binding. The active-site Nucleophile; for glutamine hydrolysis is the Cys393. L-glutamine-binding positions include 394 to 397 (LGLQ), Glu416, and Arg477. Active-site residues include His524 and Glu526. Positions 559 to 583 (PERVSNGAERRDQVGQSIPEPANRG) are disordered.

The protein belongs to the CTP synthase family. In terms of assembly, homotetramer.

It catalyses the reaction UTP + L-glutamine + ATP + H2O = CTP + L-glutamate + ADP + phosphate + 2 H(+). It carries out the reaction L-glutamine + H2O = L-glutamate + NH4(+). The enzyme catalyses UTP + NH4(+) + ATP = CTP + ADP + phosphate + 2 H(+). It functions in the pathway pyrimidine metabolism; CTP biosynthesis via de novo pathway; CTP from UDP: step 2/2. Allosterically activated by GTP, when glutamine is the substrate; GTP has no effect on the reaction when ammonia is the substrate. The allosteric effector GTP functions by stabilizing the protein conformation that binds the tetrahedral intermediate(s) formed during glutamine hydrolysis. Inhibited by the product CTP, via allosteric rather than competitive inhibition. Functionally, catalyzes the ATP-dependent amination of UTP to CTP with either L-glutamine or ammonia as the source of nitrogen. Regulates intracellular CTP levels through interactions with the four ribonucleotide triphosphates. The protein is CTP synthase of Mycobacterium marinum (strain ATCC BAA-535 / M).